The primary structure comprises 224 residues: Thiamine-phosphate synthase (224 aa).

4-amino-2-methyl-5-(diphosphooxymethyl)pyrimidine contacts are provided by residues 44–48 and Asn-79; that span reads QFREK. Positions 80 and 99 each coordinate Mg(2+). Ser-117 serves as a coordination point for 4-amino-2-methyl-5-(diphosphooxymethyl)pyrimidine. A 2-[(2R,5Z)-2-carboxy-4-methylthiazol-5(2H)-ylidene]ethyl phosphate-binding site is contributed by 143–145; sequence TET. Lys-146 serves as a coordination point for 4-amino-2-methyl-5-(diphosphooxymethyl)pyrimidine. 2-[(2R,5Z)-2-carboxy-4-methylthiazol-5(2H)-ylidene]ethyl phosphate-binding positions include Gly-175 and 195–196; that span reads IS.

The protein belongs to the thiamine-phosphate synthase family. Requires Mg(2+) as cofactor.

It catalyses the reaction 2-[(2R,5Z)-2-carboxy-4-methylthiazol-5(2H)-ylidene]ethyl phosphate + 4-amino-2-methyl-5-(diphosphooxymethyl)pyrimidine + 2 H(+) = thiamine phosphate + CO2 + diphosphate. It carries out the reaction 2-(2-carboxy-4-methylthiazol-5-yl)ethyl phosphate + 4-amino-2-methyl-5-(diphosphooxymethyl)pyrimidine + 2 H(+) = thiamine phosphate + CO2 + diphosphate. The catalysed reaction is 4-methyl-5-(2-phosphooxyethyl)-thiazole + 4-amino-2-methyl-5-(diphosphooxymethyl)pyrimidine + H(+) = thiamine phosphate + diphosphate. It participates in cofactor biosynthesis; thiamine diphosphate biosynthesis; thiamine phosphate from 4-amino-2-methyl-5-diphosphomethylpyrimidine and 4-methyl-5-(2-phosphoethyl)-thiazole: step 1/1. Its function is as follows. Condenses 4-methyl-5-(beta-hydroxyethyl)thiazole monophosphate (THZ-P) and 2-methyl-4-amino-5-hydroxymethyl pyrimidine pyrophosphate (HMP-PP) to form thiamine monophosphate (TMP). The chain is Thiamine-phosphate synthase from Bacillus velezensis (strain DSM 23117 / BGSC 10A6 / LMG 26770 / FZB42) (Bacillus amyloliquefaciens subsp. plantarum).